Consider the following 733-residue polypeptide: Cyclic nucleotide-gated channel (733 aa).

Disordered regions lie at residues 1-33 and 67-95; these read MSTAEPAPDPTNPSTSGLAPTTNGIGSPPPTAS and PNGNSNAVQPAATGGQPASSDGGSAIEVP. Over 1 to 125 the chain is Cytoplasmic; it reads MSTAEPAPDP…PSTDNFYYWT (125 aa). Residues 12 to 25 are compositionally biased toward polar residues; sequence NPSTSGLAPTTNGI. Residues 126-148 traverse the membrane as a helical segment; sequence CVVTVAYIYNLLFVIARQVFNDL. At 149–197 the chain is on the extracellular side; the sequence is IGPSSQSLCRFYNGTLNSTTQVECTYNMLTNMKEMPTYSQYPDLGWSKY. A helical transmembrane segment spans residues 198–217; that stretch reads WHFRMLWVFFDLLMDCVYLI. The Cytoplasmic segment spans residues 218–251; it reads DTFLNYRMGYMDQGLVVREAEKVTKAYWQSKQYR. A helical membrane pass occupies residues 252–265; the sequence is IDGISLIPLDYILG. Topologically, residues 266 to 276 are extracellular; sequence WPIPYINWRGL. Residues 277-287 traverse the membrane as a helical segment; the sequence is PILRLNRLIRY. The Cytoplasmic portion of the chain corresponds to 288–308; the sequence is KRVRNCLERTETRSSMPNAFR. The helical transmembrane segment at 309 to 331 threads the bilayer; sequence VVVVVWYIVIIIHWNACLYFWIS. The Extracellular segment spans residues 332-362; it reads EWIGLGTDAWVYGHLNKQSLPDDITDTLLRR. Helical transmembrane passes span 363-385 and 386-411; these read YVYSFYWSTLILTTIGEVPSPVR and NIEYAFVTLDLMCGVLIFATIVGNVG. The interval 376-379 is selectivity filter; it reads TIGE. Glutamate 379 is a Na(+) binding site. Residues 412-733 lie on the Cytoplasmic side of the membrane; that stretch reads SMISNMSAAR…TGTESESLLK (322 aa). The C-linker stretch occupies residues 419–496; the sequence is AARTEFQNKM…TLRKVRIFQD (78 aa). Residues 493–607 form a cyclic nucleotide-binding domain region; the sequence is IFQDCEAGLL…ALREYPDARK (115 aa). Glycine 559 provides a ligand contact to 3',5'-cyclic GMP. Glutamate 560 contributes to the 3',5'-cyclic AMP binding site. 3',5'-cyclic GMP is bound by residues serine 562, arginine 575, threonine 576, lysine 619, and aspartate 620. Arginine 575 contacts 3',5'-cyclic AMP. A disordered region spans residues 694 to 733; sequence SIDGGDISTDGVDERVRPPRLRQTKTIDLPTGTESESLLK.

The protein belongs to the cyclic nucleotide-gated cation channel (TC 1.A.1.5) family. Homotetramer. In terms of tissue distribution, expressed at the sensory endings of thermosensory, gustatory, and olfactory neurons.

The protein localises to the cell membrane. It localises to the cell projection. It is found in the cilium. The catalysed reaction is Ca(2+)(in) = Ca(2+)(out). It catalyses the reaction Na(+)(in) = Na(+)(out). It carries out the reaction K(+)(in) = K(+)(out). Its function is as follows. Pore-forming subunit of the cyclic nucleotide-gated channel. Required for normal thermosensation and chemosensation sensory behavior. Required, downstream of receptor-type guanylate cyclase gcy-9, for CO2-mediated responses in BAG neurons. Required, downstream of receptor-type guanylate cyclase gcy-14, for alkaline pH-mediated responses in ASE-left (ASEL) neurons. Involved in the development of ASJ sensory neuron axon during late larval stages and in the maintenance of normal axon morphology in the adult. Regulates dauer formation. Required for the calcium flux to the cytoplasm in the ASJ sensory neurons upon the onset and removal of a nitric oxide (NO) stimulus, thereby promoting the ASJ-mediated behavioral avoidance response to NO-producing organisms like P.aeruginosa. In ASI and ASJ sensory neurons, controls behavioral response to P.aeruginosa by up-regulating the transcription of daf-7, a member of the TGF-beta family. In AWB and AWC sensory neurons, mediates the recognition of food odors which subsequently allows for the detection of preferred food sources. In AWC neurons, acts to promote expression of srsx-3, a member of the GPCR family. Binding to cGMP results in conformational changes at the hydrophobic gate that converts the protein from an inactive closed state to an active open state. In Caenorhabditis elegans, this protein is Cyclic nucleotide-gated channel (tax-4).